A 681-amino-acid polypeptide reads, in one-letter code: Auxin response factor 8 (681 aa).

The segment at residues Phe120–Lys222 is a DNA-binding region (TF-B3). Disordered regions lie at residues Leu474–Pro518 and Ser534–Glu577. Composition is skewed to polar residues over residues Ser534–Lys555 and Gly564–Glu577. Residues Pro595–Gly675 form the PB1 domain.

The protein belongs to the ARF family. As to quaternary structure, homodimers and heterodimers. Expressed in roots, culms, leaves and young panicles.

The protein resides in the nucleus. In terms of biological role, auxin response factors (ARFs) are transcriptional factors that bind specifically to the DNA sequence 5'-TGTCTC-3' found in the auxin-responsive promoter elements (AuxREs). This chain is Auxin response factor 8 (ARF8), found in Oryza sativa subsp. japonica (Rice).